The primary structure comprises 272 residues: Imidazole glycerol phosphate synthase subunit HisF (272 aa).

Residues Asp12 and Asp131 contribute to the active site.

Belongs to the HisA/HisF family. As to quaternary structure, heterodimer of HisH and HisF.

It localises to the cytoplasm. It carries out the reaction 5-[(5-phospho-1-deoxy-D-ribulos-1-ylimino)methylamino]-1-(5-phospho-beta-D-ribosyl)imidazole-4-carboxamide + L-glutamine = D-erythro-1-(imidazol-4-yl)glycerol 3-phosphate + 5-amino-1-(5-phospho-beta-D-ribosyl)imidazole-4-carboxamide + L-glutamate + H(+). The protein operates within amino-acid biosynthesis; L-histidine biosynthesis; L-histidine from 5-phospho-alpha-D-ribose 1-diphosphate: step 5/9. In terms of biological role, IGPS catalyzes the conversion of PRFAR and glutamine to IGP, AICAR and glutamate. The HisF subunit catalyzes the cyclization activity that produces IGP and AICAR from PRFAR using the ammonia provided by the HisH subunit. The sequence is that of Imidazole glycerol phosphate synthase subunit HisF from Methanopyrus kandleri (strain AV19 / DSM 6324 / JCM 9639 / NBRC 100938).